The following is a 170-amino-acid chain: CASP-like protein 1F1 (170 aa).

Topologically, residues 1-16 are cytoplasmic; the sequence is MMGDNEGRRTPLLNLG. Residues 17–37 traverse the membrane as a helical segment; it reads VQVSMRVLIIGAAMASMWVMI. The Extracellular portion of the chain corresponds to 38-62; sequence TNREVASVYGIAFEAKYSYSSAFRY. Residues 63 to 83 form a helical membrane-spanning segment; the sequence is LVYAQIAVCAATLFTLVWACL. At 84–88 the chain is on the cytoplasmic side; it reads AVRRR. The helical transmembrane segment at 89-109 threads the bilayer; the sequence is GLVFALFFFDLLTTLTAISAF. The Extracellular portion of the chain corresponds to 110–141; it reads SAAFAEGYVGKYGNKQAGWLPICGYVHVYCSR. A helical membrane pass occupies residues 142-162; it reads VTISLAMSFASFVLLFILTVL. The Cytoplasmic portion of the chain corresponds to 163–170; sequence TASSARHY.

It belongs to the Casparian strip membrane proteins (CASP) family. As to quaternary structure, homodimer and heterodimers.

The protein resides in the cell membrane. This Arabidopsis lyrata subsp. lyrata (Lyre-leaved rock-cress) protein is CASP-like protein 1F1.